A 60-amino-acid polypeptide reads, in one-letter code: UPF0434 protein Vapar_2640 (60 aa).

It belongs to the UPF0434 family.

The chain is UPF0434 protein Vapar_2640 from Variovorax paradoxus (strain S110).